The following is an 885-amino-acid chain: Protein arg11, mitochondrial (885 aa).

The transit peptide at 1-59 (MLIELQQIVKSGLVRNGAKHCTKRSLLCSNASVIASKRFQGSFAPGQQQPLNPLAKPIE) directs the protein to the mitochondrion. One can recognise an N-acetyltransferase domain in the interval 346–499 (FVINKHDSLD…SDKPFADAII (154 aa)). The segment covering 503 to 523 (STKPPTASSTTNNPSSSQINQ) has biased composition (low complexity). The tract at residues 503–532 (STKPPTASSTTNNPSSSQINQKRSYSTSSL) is disordered. C703 is a catalytic residue.

In the N-terminal section; belongs to the acetylglutamate kinase family. This sequence in the C-terminal section; belongs to the NAGSA dehydrogenase family. Post-translationally, the protein precursor is probably cleaved into the two biologically active enzymes, the kinase and the reductase.

The protein localises to the mitochondrion. The enzyme catalyses N-acetyl-L-glutamate 5-semialdehyde + phosphate + NADP(+) = N-acetyl-L-glutamyl 5-phosphate + NADPH + H(+). It carries out the reaction N-acetyl-L-glutamate + ATP = N-acetyl-L-glutamyl 5-phosphate + ADP. The protein operates within amino-acid biosynthesis; L-arginine biosynthesis; N(2)-acetyl-L-ornithine from L-glutamate: step 2/4. Its pathway is amino-acid biosynthesis; L-arginine biosynthesis; N(2)-acetyl-L-ornithine from L-glutamate: step 3/4. With respect to regulation, the kinase activity is inhibited by arginine. This is Protein arg11, mitochondrial (arg11) from Schizosaccharomyces pombe (strain 972 / ATCC 24843) (Fission yeast).